We begin with the raw amino-acid sequence, 294 residues long: MFTIEVLAQKLAPHASFLGGLVVAAILGLFIFFQEKDRKVLDPVEWRSFKLVDKDHLSHNTALYRFALPRASDSLGLPIGQHISVAAEINGKQVVRSYTPTTLDDDKGHFDLVVKTYEKGNISRYLSLLTIGQEIKVKGPKGKFVYTPNMAPHLVMIAGGTGITPMYQIIKSSIKTPGDKTRLSLIYANIQEDDILLKKEIDELQAKSNGRFDVKYVLNNPPEGWTGGVGFVTKEMIEEAMPSSGVGSANHGEGHKVLMCGPPPMITAMKGHLAQIGYPAPRSVSKLEDQVFLF.

The chain crosses the membrane as a helical span at residues 13-33 (PHASFLGGLVVAAILGLFIFF). The region spanning 44–147 (VEWRSFKLVD…KGPKGKFVYT (104 aa)) is the FAD-binding FR-type domain. FAD is bound by residues 127-142 (SLLTIGQEIKVKGPKG) and 153-185 (HLVMIAGGTGITPMYQIIKSSIKTPGDKTRLSL).

It belongs to the flavoprotein pyridine nucleotide cytochrome reductase family. In terms of assembly, monomer. Component of the 2-(3-amino-3-carboxypropyl)histidine synthase complex composed of DPH1, DPH2, DPH3 and a NADH-dependent reductase, predominantly CBR1. FAD is required as a cofactor.

The protein resides in the mitochondrion outer membrane. The catalysed reaction is 2 Fe(III)-[cytochrome b5] + NADH = 2 Fe(II)-[cytochrome b5] + NAD(+) + H(+). The enzyme catalyses 2 Fe(3+)-[Dph3] + NADH = 2 Fe(2+)-[Dph3] + NAD(+) + H(+). It functions in the pathway protein modification; peptidyl-diphthamide biosynthesis. Functionally, NADH-dependent reductase for DPH3 and cytochrome b5. Required for the first step of diphthamide biosynthesis, a post-translational modification of histidine which occurs in elongation factor 2. DPH1 and DPH2 transfer a 3-amino-3-carboxypropyl (ACP) group from S-adenosyl-L-methionine (SAM) to a histidine residue, the reaction is assisted by a reduction system comprising DPH3 and a NADH-dependent reductase, predominantly CBR1. By reducing DPH3, also involved in the formation of the tRNA wobble base modification mcm5s 2U (5-methoxycarbonylmethyl-2-thiouridine), mediated by the elongator complex. The cytochrome b5/NADH cytochrome b5 reductase electron transfer system supports the catalytic activity of several sterol biosynthetic enzymes. In Cryptococcus neoformans var. neoformans serotype D (strain B-3501A) (Filobasidiella neoformans), this protein is NADH-cytochrome b5 reductase 1 (CBR1).